Here is a 664-residue protein sequence, read N- to C-terminus: CRISPR-associated DNA-binding protein Cas12m (664 aa).

The tract at residues 1–137 (MKRVTITIDG…AKYRELIGSD (137 aa)) is recognition domain (REC1-N). The recognition domain (REC2) stretch occupies residues 138-212 (EETAQMDTEI…AAKDRIRAAG (75 aa)). The segment at 213 to 270 (NDIENLEKDRQAAVIKAYNNSGLWWGNYNAVLESYKKARIKALKDGAELKYHRFDGSG) is recognition domain (REC1-C). The interval 271-390 (RFTNQIQGGM…VWSVVFTFTT (120 aa)) is wedge domain (WED). A linker region spans residues 391–404 (DCPTYDQRSSTGNR). The interval 405 to 618 (CGLNLGWKKQ…KNGTQIEQVS (214 aa)) is ruvC-I. Residues 618 to 650 (STASSATCSACKGKMEQVDGIMWRCRECRALVD) form a target nucleic-acid binding (TNB) region. Residues Cys-625, Cys-628, Cys-642, and Cys-645 each coordinate Zn(2+). Residues 651-664 (QDINAAANLFREVL) form a ruvC-II region. Asp-652 provides a ligand contact to Mg(2+).

This sequence belongs to the CRISPR-associated DNA-binding protein Cas12m family. Mg(2+) is required as a cofactor. Zn(2+) serves as cofactor.

In terms of biological role, CRISPR (clustered regularly interspaced short palindromic repeat), is an adaptive immune system that provides protection against mobile genetic elements (viruses, transposable elements and conjugative plasmids). CRISPR clusters contain sequences complementary to antecedent mobile elements and target invading nucleic acids. CRISPR clusters are transcribed and processed into CRISPR RNA (crRNA). Recognizes a short motif in the CRISPR repeat sequences (the 5' PAM or protospacer adjacent motif, 5'-CCN-3' in this organism) to help distinguish self versus nonself, as targets within the bacterial CRISPR locus do not have PAMs. Cas12m-crRNA binds DNA in a PAM-dependent, crRNA-guided fashion. DNA-binding probably inhibits transcription, leading to gene silencing. Upon expression in E.coli as a CRISPR region preferentially binds to its associated crRNA. Probably required for pre-crRNA processing to mature crRNA. The chain is CRISPR-associated DNA-binding protein Cas12m from Pelobacter propionicus (strain DSM 2379 / NBRC 103807 / OttBd1).